The following is a 226-amino-acid chain: Neuron-specific vesicular protein calcyon (226 aa).

A disordered region spans residues 1 to 21; it reads MVKLGCSFSGKPGKEAGDQDG. Residues 1–88 are Extracellular-facing; the sequence is MVKLGCSFSG…EEGRRLPTAR (88 aa). A helical membrane pass occupies residues 89-109; the sequence is MIAFAMALLGCVLIMYKAIWY. Residues 110 to 226 are Cytoplasmic-facing; it reads DQFTCPDGFL…AEGVPSQPPK (117 aa). The tract at residues 177–226 is disordered; the sequence is HKGTTPAAMAVSTAAAAAAAEGTEPSGKSLDTREKEDPQKAEGVPSQPPK. Residues 183-196 are compositionally biased toward low complexity; that stretch reads AAMAVSTAAAAAAA. A compositionally biased stretch (basic and acidic residues) spans 206–216; it reads LDTREKEDPQK.

Belongs to the NSG family. Interacts with CLTA. Most abundant in brain. Also expressed in testis and ovary and, at much lower levels, in kidney and heart.

Its subcellular location is the cytoplasmic vesicle membrane. It is found in the cell membrane. In terms of biological role, interacts with clathrin light chain A and stimulates clathrin self-assembly and clathrin-mediated endocytosis. The protein is Neuron-specific vesicular protein calcyon (Caly) of Mus musculus (Mouse).